A 407-amino-acid chain; its full sequence is MFSKIIQSYAKGNLIVQICIGIVLGILIGISSKEISEIANLLGILFTSALKAIAPMLVFILILTSICTKDFSQSGAKIKNIIILYIVGTFLASACAVLANFFFPVKLVLDGVQTATNSSPTHMSEIFKDLLFKIVDNPINALSSGNYLGILTWAIAGGIALKHCSNEAKQVFIDINEGVLKIVKFIVKLAPFGIFGLVANSVAQTGAQGLLSYVKLLILLVTTMLFVTFVINALIVFFYTRKNPFPLIFICLRHSAFFAFFTRSSAANIPVNMALCAKLGIDKEFYGISIPLGATINMAGAAVTIAILSLTAANTVGIEISLLQAFLLSIIATFAACGASGVAGGSLLLIPLACSLFNIDYDIAMKVVAIGFIIGVIQDSVETALNSSTDVLFTAICSKNELNYNIK.

A run of 9 helical transmembrane segments spans residues 12 to 32 (GNLI…GISS), 42 to 62 (LGIL…FILI), 81 to 101 (IIIL…LANF), 141 to 161 (ALSS…GIAL), 179 to 199 (VLKI…GLVA), 218 to 238 (ILLV…IVFF), 245 to 267 (FPLI…SSAA), 288 to 308 (ISIP…IAIL), and 330 to 350 (IIAT…LLLI).

Belongs to the dicarboxylate/amino acid:cation symporter (DAACS) (TC 2.A.23) family.

It is found in the cell inner membrane. It catalyses the reaction L-serine(in) + Na(+)(in) = L-serine(out) + Na(+)(out). The catalysed reaction is L-threonine(in) + Na(+)(in) = L-threonine(out) + Na(+)(out). Its function is as follows. Involved in the import of serine and threonine into the cell, with the concomitant import of sodium (symport system). The protein is Serine/threonine transporter SstT of Campylobacter jejuni subsp. jejuni serotype O:6 (strain 81116 / NCTC 11828).